A 551-amino-acid polypeptide reads, in one-letter code: Glucans biosynthesis protein D (551 aa).

Residues 1–32 (MNRRRFLQGSLAMAALSGTTGLSTLFSRAAFA) constitute a signal peptide (tat-type signal).

Belongs to the OpgD/OpgG family. Predicted to be exported by the Tat system. The position of the signal peptide cleavage has not been experimentally proven.

Its subcellular location is the periplasm. Its pathway is glycan metabolism; osmoregulated periplasmic glucan (OPG) biosynthesis. Probably involved in the control of the structural glucose backbone of osmoregulated periplasmic glucans (OPGs). This chain is Glucans biosynthesis protein D, found in Enterobacter sp. (strain 638).